A 482-amino-acid chain; its full sequence is Cobyrinate a,c-diamide synthase (482 aa).

Positions 248 to 441 (RLAIAQDQAF…LHLHWGSQIS (194 aa)) constitute a GATase cobBQ-type domain. The active-site Nucleophile is the C331.

It belongs to the CobB/CbiA family. Mg(2+) is required as a cofactor.

The catalysed reaction is cob(II)yrinate + 2 L-glutamine + 2 ATP + 2 H2O = cob(II)yrinate a,c diamide + 2 L-glutamate + 2 ADP + 2 phosphate + 2 H(+). Its pathway is cofactor biosynthesis; adenosylcobalamin biosynthesis; cob(II)yrinate a,c-diamide from sirohydrochlorin (anaerobic route): step 10/10. Its function is as follows. Catalyzes the ATP-dependent amidation of the two carboxylate groups at positions a and c of cobyrinate, using either L-glutamine or ammonia as the nitrogen source. In Synechocystis sp. (strain ATCC 27184 / PCC 6803 / Kazusa), this protein is Cobyrinate a,c-diamide synthase.